The chain runs to 221 residues: Transcription factor MYB1 (221 aa).

2 HTH myb-type domains span residues Met-1–Leu-57 and Arg-58–Leu-112. 2 DNA-binding regions (H-T-H motif) span residues Trp-33 to Leu-57 and Trp-85 to Leu-108. The disordered stretch occupies residues Lys-126–Glu-154.

In terms of tissue distribution, expressed in stems and leaves. Expressed at low levels in ovaries.

It is found in the nucleus. Transcription activator involved in the regulation of anthocyanin biosynthesis in red-fleshed kiwifruit varieties. Activates the transcription of genes involved in anthocyanin biosynthesis, such as dihydroflavonol reductase (DFR), anthocyanidin synthase (ANS) and UDP flavonoid glycosyltransferase (UFGT). This chain is Transcription factor MYB1, found in Actinidia chinensis var. chinensis (Chinese soft-hair kiwi).